The chain runs to 113 residues: Tyrosine-protein phosphatase 15 (113 aa).

Residues Trp1–Ile113 form the Tyrosine-protein phosphatase domain.

The protein belongs to the protein-tyrosine phosphatase family.

It catalyses the reaction O-phospho-L-tyrosyl-[protein] + H2O = L-tyrosyl-[protein] + phosphate. This is Tyrosine-protein phosphatase 15 (STY-15) from Styela plicata (Wrinkled sea squirt).